A 136-amino-acid chain; its full sequence is Small ribosomal subunit protein uS8c (136 aa).

It belongs to the universal ribosomal protein uS8 family. In terms of assembly, part of the 30S ribosomal subunit.

The protein resides in the plastid. The protein localises to the chloroplast. Functionally, one of the primary rRNA binding proteins, it binds directly to 16S rRNA central domain where it helps coordinate assembly of the platform of the 30S subunit. In Saccharum hybrid (Sugarcane), this protein is Small ribosomal subunit protein uS8c (rps8).